Here is a 157-residue protein sequence, read N- to C-terminus: MSGLQKQEALVQEFKDLLKQEQFGSQGEIVDALKANGFDNISQSKISRMLSKFGAVRTRNARQEMVYCLPAELGVPTAQSPLKQLVLEIEHNEVMIIIQTSPGAAQLIARLLDSLSKSDGVLGTIAGDDTIFIAPSDVSKINETIKKLEQLFSKNLT.

The protein belongs to the ArgR family.

It localises to the cytoplasm. It functions in the pathway amino-acid biosynthesis; L-arginine biosynthesis [regulation]. In terms of biological role, regulates arginine biosynthesis genes. The sequence is that of Arginine repressor from Colwellia psychrerythraea (strain 34H / ATCC BAA-681) (Vibrio psychroerythus).